The sequence spans 227 residues: Orotidine 5'-phosphate decarboxylase (227 aa).

Residues Asp8, Lys30, 59 to 68 (DLKLYDIPYT), Thr118, Arg178, Gln187, Gly207, and Arg208 each bind substrate. Lys61 serves as the catalytic Proton donor.

It belongs to the OMP decarboxylase family. Type 1 subfamily. In terms of assembly, homodimer.

The enzyme catalyses orotidine 5'-phosphate + H(+) = UMP + CO2. It participates in pyrimidine metabolism; UMP biosynthesis via de novo pathway; UMP from orotate: step 2/2. Its function is as follows. Catalyzes the decarboxylation of orotidine 5'-monophosphate (OMP) to uridine 5'-monophosphate (UMP). This Helicobacter pylori (strain J99 / ATCC 700824) (Campylobacter pylori J99) protein is Orotidine 5'-phosphate decarboxylase.